The chain runs to 372 residues: MLLNDIISGKLVDSVYIIAEIGQNHQGCVETAKKMIWEAKKAGCHCVKFQKSDLPAKFTRSALDREYISDHAWGKTYGEHKEYLEFSKDQYLQLQAHCKELNVDFTASAMDERSLEFLSALNVPFIKIGSGDANNFPLLKKAANLNLPLVISTGMQTMQTVERIVQTMRESGKEDYALMHCVSSYPTDPKDCSLQLISVLRTRFPNVAIGYSGHELGVIISQAAVLLGARIVERHFTLDKSQKGSDHRCSLEPQELKALTTAITNFKLSSVPMPPQEIVKKLNGDEELEAALQHVESKTILPCELPCRNKLGKSIVAARNLNKGYRLQLADMAIKVSEPSGLTAEDFLDLVGKELADNIGEDEPILGNSIIN.

One can recognise an AFP-like domain in the interval 314–372 (SIVAARNLNKGYRLQLADMAIKVSEPSGLTAEDFLDLVGKELADNIGEDEPILGNSIIN).

The catalysed reaction is aldehydo-N-acetyl-D-mannosamine 6-phosphate + phosphoenolpyruvate + H2O = N-acetylneuraminate 9-phosphate + phosphate. It carries out the reaction aldehydo-D-mannose 6-phosphate + phosphoenolpyruvate + H2O = 3-deoxy-D-glycero-beta-D-galacto-non-2-ulopyranosonate 9-phosphate + phosphate. In terms of biological role, catalyzes the condensation of phosphoenolpyruvate (PEP) and N-acetylmannosamine 6-phosphate (ManNAc-6-P) or D-mannose 6-phosphate (Man-6-P) to generate the phosphorylated forms of both the sialic acids N-acetylneuraminic acid (Neu5Ac) and deaminoneuraminic acid (KDN), respectively. Essential for biosynthesis of sialic acids in neurons of the central nervous system. This chain is N-acetylneuraminate-9-phosphate synthase, found in Drosophila melanogaster (Fruit fly).